We begin with the raw amino-acid sequence, 191 residues long: uncharacterized protein (191 aa).

This is an uncharacterized protein from Treponema pallidum (strain Nichols).